The primary structure comprises 289 residues: Serine/threonine-protein phosphatase Pgam5, mitochondrial (289 aa).

Belongs to the phosphoglycerate mutase family. BPG-dependent PGAM subfamily. In terms of assembly, interacts with Pk92B/ASK1.

The protein resides in the mitochondrion outer membrane. The enzyme catalyses O-phospho-L-seryl-[protein] + H2O = L-seryl-[protein] + phosphate. The catalysed reaction is O-phospho-L-threonyl-[protein] + H2O = L-threonyl-[protein] + phosphate. Its function is as follows. Displays phosphatase activity for serine/threonine residues, and dephosphorylates and activates Pk92B kinase. Has apparently no phosphoglycerate mutase activity. This is Serine/threonine-protein phosphatase Pgam5, mitochondrial from Drosophila yakuba (Fruit fly).